We begin with the raw amino-acid sequence, 395 residues long: Testis-expressed protein 44 (395 aa).

4 disordered regions span residues 1–32 (MALP…PLTA), 46–100 (WQDI…LQVS), 133–215 (KMSQ…SDES), and 235–258 (FPPP…GRRP). Over residues 53-65 (SFKTATPRAISTS) the composition is skewed to polar residues. The segment covering 87–98 (PLLPSQNPSPLQ) has biased composition (low complexity). Basic and acidic residues predominate over residues 192-207 (SAEEKAEHPKAPHPEA). S333 is modified (phosphoserine).

As to expression, testis. Detected in germ cells at all stages of the seminiferous epithelium, strong expression in elongating spermatids (at protein level).

The protein resides in the cytoplasm. This Homo sapiens (Human) protein is Testis-expressed protein 44.